The sequence spans 93 residues: Large ribosomal subunit protein eL37A (93 aa).

C19, C22, C34, and C37 together coordinate Zn(2+). The segment at 19–37 (CRRCGRSSYHIQKSTCAQC) adopts a C4-type zinc-finger fold.

This sequence belongs to the eukaryotic ribosomal protein eL37 family. The cofactor is Zn(2+).

Binds to the 23S rRNA. This is Large ribosomal subunit protein eL37A from Drosophila melanogaster (Fruit fly).